A 380-amino-acid chain; its full sequence is Ribosomal RNA large subunit methyltransferase G (380 aa).

Belongs to the methyltransferase superfamily. RlmG family.

The protein localises to the cytoplasm. The catalysed reaction is guanosine(1835) in 23S rRNA + S-adenosyl-L-methionine = N(2)-methylguanosine(1835) in 23S rRNA + S-adenosyl-L-homocysteine + H(+). In terms of biological role, specifically methylates the guanine in position 1835 (m2G1835) of 23S rRNA. The protein is Ribosomal RNA large subunit methyltransferase G of Aeromonas hydrophila subsp. hydrophila (strain ATCC 7966 / DSM 30187 / BCRC 13018 / CCUG 14551 / JCM 1027 / KCTC 2358 / NCIMB 9240 / NCTC 8049).